The following is a 491-amino-acid chain: Serine/threonine-protein phosphatase 2A regulatory subunit B'' subunit delta (491 aa).

Positions 331–366 (TTPTSTEYWFRCMDLDGDGALSMFELEFFYEEQAQR) constitute an EF-hand domain. 4 residues coordinate Ca(2+): Asp-344, Asp-346, Asp-348, and Glu-355. Acidic residues-rich tracts occupy residues 460–473 (AMAE…EGSD) and 481–491 (ADEDCDDLEPL). The interval 460–491 (AMAEDDDDHDEGSDPIDLYGLADEDCDDLEPL) is disordered.

In terms of assembly, PP2A consists of a common heterodimeric core enzyme, composed of a 36 kDa catalytic subunit (subunit C) and a 65 kDa constant regulatory subunit (PR65 or subunit A), that associates with a variety of regulatory subunits. Proteins that associate with the core dimer include three families of regulatory subunits B (the R2/B/PR55/B55, R3/B''/PR72/PR130/PR59 and R5/B'/B56 families), the 48 kDa variable regulatory subunit, viral proteins, and cell signaling molecules. As to expression, expressed in testis, kidney, liver, lung, spleen, brain and heart.

Functionally, the B regulatory subunit might modulate substrate selectivity and catalytic activity, and might also direct the localization of the catalytic enzyme to a particular subcellular compartment. Interacts with retinoblastoma-related protein p107 (in vivo). May target PP2A core dimer to p107 resulting in dephosphorylation of p107. In Mus musculus (Mouse), this protein is Serine/threonine-protein phosphatase 2A regulatory subunit B'' subunit delta (Ppp2r3d).